A 1763-amino-acid chain; its full sequence is Collagen alpha-2(IV) chain (1763 aa).

The first 26 residues, Met-1–Ser-26, serve as a signal peptide directing secretion. The segment at Thr-27–Val-42 is 7S domain. The triple-helical region stretch occupies residues Gly-43–Ser-1529. Disordered regions lie at residues Pro-51 to Lys-529 and Ala-550 to Ser-1529. Positions Pro-72–Gln-81 are enriched in low complexity. An N-linked (GlcNAc...) asparagine glycan is attached at Asn-126. Over residues Pro-135–Val-152 the composition is skewed to pro residues. Residues Phe-190–Asp-199 are compositionally biased toward basic and acidic residues. Pro residues predominate over residues Arg-206–Asn-217. A compositionally biased stretch (low complexity) spans Pro-225 to Arg-235. Ala-249 is a glycosylation site (O-linked (Xyl...) (glycosaminoglycan) serine). The segment covering Asp-326–Pro-335 has biased composition (low complexity). Gly residues predominate over residues Gly-400–Gly-409. Composition is skewed to low complexity over residues Leu-410–Pro-419 and Ile-428–Arg-453. Basic and acidic residues predominate over residues Lys-466–Glu-481. Positions Leu-564–Ala-582 are enriched in low complexity. The span at Pro-583–Pro-592 shows a compositional bias: pro residues. Low complexity-rich tracts occupy residues Asp-699–Pro-714 and Lys-731–Pro-783. Pro residues predominate over residues Pro-810–Phe-832. Low complexity-rich tracts occupy residues Glu-865–Pro-895, Phe-946–Lys-977, Pro-1040–Pro-1051, Leu-1077–Leu-1086, Pro-1108–Leu-1146, Pro-1210–Arg-1231, Leu-1280–Lys-1296, Pro-1367–Pro-1386, Leu-1462–Ala-1480, and Pro-1499–Ile-1510. Residues Pro-1511–Pro-1528 are compositionally biased toward pro residues. One can recognise a Collagen IV NC1 domain in the interval Gly-1533–Pro-1756. 6 disulfides stabilise this stretch: Cys-1548–Cys-1637, Cys-1581–Cys-1634, Cys-1593–Cys-1599, Cys-1656–Cys-1752, Cys-1690–Cys-1749, and Cys-1702–Cys-1709.

This sequence belongs to the type IV collagen family. In terms of assembly, trimers of two alpha 1(IV) and one alpha 2(IV) chain. Type IV collagen forms a mesh-like network linked through intermolecular interactions between 7S domains and between NC1 domains. In terms of processing, prolines at the third position of the tripeptide repeating unit (G-X-Y) are hydroxylated in some or all of the chains. Type IV collagens contain numerous cysteine residues which are involved in inter- and intramolecular disulfide bonding. 12 of these, located in the NC1 domain, are conserved in all known type IV collagens. Post-translationally, the trimeric structure of the NC1 domains is stabilized by covalent bonds between Lys and Met residues.

It is found in the secreted. The protein resides in the extracellular space. The protein localises to the extracellular matrix. It localises to the basement membrane. In terms of biological role, collagen type IV is specific for basement membranes. The protein is Collagen alpha-2(IV) chain of Ascaris suum (Pig roundworm).